The chain runs to 150 residues: Aspartate carbamoyltransferase regulatory chain (150 aa).

4 residues coordinate Zn(2+): C105, C110, C133, and C136.

The protein belongs to the PyrI family. Contains catalytic and regulatory chains. The cofactor is Zn(2+).

Its function is as follows. Involved in allosteric regulation of aspartate carbamoyltransferase. In Thermococcus sibiricus (strain DSM 12597 / MM 739), this protein is Aspartate carbamoyltransferase regulatory chain.